The following is a 231-amino-acid chain: 7-cyano-7-deazaguanine synthase (231 aa).

8-18 is a binding site for ATP; it reads FSGGQDSTTCL. Positions 187, 196, 199, and 202 each coordinate Zn(2+).

Belongs to the QueC family. Zn(2+) serves as cofactor.

It carries out the reaction 7-carboxy-7-deazaguanine + NH4(+) + ATP = 7-cyano-7-deazaguanine + ADP + phosphate + H2O + H(+). It participates in purine metabolism; 7-cyano-7-deazaguanine biosynthesis. In terms of biological role, catalyzes the ATP-dependent conversion of 7-carboxy-7-deazaguanine (CDG) to 7-cyano-7-deazaguanine (preQ(0)). The protein is 7-cyano-7-deazaguanine synthase of Vibrio cholerae serotype O1 (strain ATCC 39541 / Classical Ogawa 395 / O395).